A 78-amino-acid chain; its full sequence is Surfactant-associated protein 2 (78 aa).

The N-terminal stretch at 1–19 is a signal peptide; the sequence is MGAGLPLVLLLTLVGSSQG. N-linked (GlcNAc...) asparagine glycosylation occurs at Asn37.

In terms of processing, N-glycosylated.

The protein resides in the secreted. The protein localises to the cytoplasmic vesicle. It localises to the secretory vesicle. Its subcellular location is the golgi apparatus. In terms of biological role, putative surfactant protein. In Bos taurus (Bovine), this protein is Surfactant-associated protein 2 (SFTA2).